The chain runs to 154 residues: MGLSDGEWQLVLNVWGKVEADIPSHGQEVLIRLFKGHPETLEKFDKFKHLKSEDEMKASEDLKKHGVTVLTALGGILKKKGHHEAEIKPLAQSHATKHKIPVKYLELISESIIQVLQSKHPGDFGADAQGAMNKALELFRNDMAAKYKELGFQG.

In terms of domain architecture, Globin spans 2 to 148 (GLSDGEWQLV…FRNDMAAKYK (147 aa)). Phosphoserine is present on serine 4. Position 65 (histidine 65) interacts with nitrite. Position 65 (histidine 65) interacts with O2. Residue threonine 68 is modified to Phosphothreonine. Histidine 94 contributes to the heme b binding site.

Belongs to the globin family. In terms of assembly, monomeric.

It localises to the cytoplasm. The protein resides in the sarcoplasm. The enzyme catalyses Fe(III)-heme b-[protein] + nitric oxide + H2O = Fe(II)-heme b-[protein] + nitrite + 2 H(+). It catalyses the reaction H2O2 + AH2 = A + 2 H2O. Its function is as follows. Monomeric heme protein which primary function is to store oxygen and facilitate its diffusion within muscle tissues. Reversibly binds oxygen through a pentacoordinated heme iron and enables its timely and efficient release as needed during periods of heightened demand. Depending on the oxidative conditions of tissues and cells, and in addition to its ability to bind oxygen, it also has a nitrite reductase activity whereby it regulates the production of bioactive nitric oxide. Under stress conditions, like hypoxia and anoxia, it also protects cells against reactive oxygen species thanks to its pseudoperoxidase activity. This Macaca fascicularis (Crab-eating macaque) protein is Myoglobin (MB).